The chain runs to 824 residues: AMP deaminase 2 (824 aa).

Positions 1–43 (MASYPGPGKSKAKYPFKKRAGLQASAAAPEARSGLGASPLQSA) are disordered. Over residues 10 to 20 (SKAKYPFKKRA) the composition is skewed to basic residues. Arg-44 is subject to Omega-N-methylarginine. 3 positions are modified to phosphoserine: Ser-45, Ser-63, and Ser-79. Tyr-90 carries the phosphotyrosine modification. Phosphoserine occurs at positions 96 and 113. Thr-133 carries the phosphothreonine modification. Phosphoserine occurs at positions 135 and 137. Zn(2+) contacts are provided by His-364 and His-366. Residues His-366 and 435–440 (KFNAKY) each bind substrate. His-633 serves as a coordination point for Zn(2+). Glu-636 provides a ligand contact to substrate. His-655 (proton acceptor) is an active-site residue. Asp-710 lines the Zn(2+) pocket. Residue 711–714 (DPLQ) coordinates substrate.

It belongs to the metallo-dependent hydrolases superfamily. Adenosine and AMP deaminases family. Homotetramer. It depends on Zn(2+) as a cofactor.

It carries out the reaction AMP + H2O + H(+) = IMP + NH4(+). It functions in the pathway purine metabolism; IMP biosynthesis via salvage pathway; IMP from AMP: step 1/1. In terms of biological role, AMP deaminase plays a critical role in energy metabolism. Catalyzes the deamination of AMP to IMP and plays an important role in the purine nucleotide cycle. The chain is AMP deaminase 2 from Mus musculus (Mouse).